A 347-amino-acid chain; its full sequence is NADH-quinone oxidoreductase subunit H (347 aa).

Helical transmembrane passes span 22 to 42, 59 to 79, 93 to 113, 124 to 144, 171 to 191, 198 to 218, 240 to 260, 285 to 305, and 321 to 341; these read GVVS…TAYL, PSLA…KLVF, FIIA…VIPI, IGGI…IIIA, MALS…IQIV, PIWL…SILA, VEYS…NMIL, IPGY…FLWI, and GLKV…AILV.

Belongs to the complex I subunit 1 family. NDH-1 is composed of 14 different subunits. Subunits NuoA, H, J, K, L, M, N constitute the membrane sector of the complex.

The protein localises to the cell inner membrane. The catalysed reaction is a quinone + NADH + 5 H(+)(in) = a quinol + NAD(+) + 4 H(+)(out). Functionally, NDH-1 shuttles electrons from NADH, via FMN and iron-sulfur (Fe-S) centers, to quinones in the respiratory chain. The immediate electron acceptor for the enzyme in this species is believed to be ubiquinone. Couples the redox reaction to proton translocation (for every two electrons transferred, four hydrogen ions are translocated across the cytoplasmic membrane), and thus conserves the redox energy in a proton gradient. This subunit may bind ubiquinone. This Orientia tsutsugamushi (strain Ikeda) (Rickettsia tsutsugamushi) protein is NADH-quinone oxidoreductase subunit H.